The following is a 351-amino-acid chain: UDP-N-acetylglucosamine--N-acetylmuramyl-(pentapeptide) pyrophosphoryl-undecaprenol N-acetylglucosamine transferase (351 aa).

UDP-N-acetyl-alpha-D-glucosamine-binding positions include threonine 12–glycine 14, asparagine 124, arginine 160, serine 188, isoleucine 239, alanine 258–glutamate 263, and glutamine 283.

It belongs to the glycosyltransferase 28 family. MurG subfamily.

Its subcellular location is the cell inner membrane. The enzyme catalyses di-trans,octa-cis-undecaprenyl diphospho-N-acetyl-alpha-D-muramoyl-L-alanyl-D-glutamyl-meso-2,6-diaminopimeloyl-D-alanyl-D-alanine + UDP-N-acetyl-alpha-D-glucosamine = di-trans,octa-cis-undecaprenyl diphospho-[N-acetyl-alpha-D-glucosaminyl-(1-&gt;4)]-N-acetyl-alpha-D-muramoyl-L-alanyl-D-glutamyl-meso-2,6-diaminopimeloyl-D-alanyl-D-alanine + UDP + H(+). It functions in the pathway cell wall biogenesis; peptidoglycan biosynthesis. Functionally, cell wall formation. Catalyzes the transfer of a GlcNAc subunit on undecaprenyl-pyrophosphoryl-MurNAc-pentapeptide (lipid intermediate I) to form undecaprenyl-pyrophosphoryl-MurNAc-(pentapeptide)GlcNAc (lipid intermediate II). This is UDP-N-acetylglucosamine--N-acetylmuramyl-(pentapeptide) pyrophosphoryl-undecaprenol N-acetylglucosamine transferase from Actinobacillus pleuropneumoniae serotype 5b (strain L20).